Here is a 103-residue protein sequence, read N- to C-terminus: Pyrimidine/purine nucleoside phosphorylase (103 aa).

This sequence belongs to the nucleoside phosphorylase PpnP family.

The enzyme catalyses a purine D-ribonucleoside + phosphate = a purine nucleobase + alpha-D-ribose 1-phosphate. The catalysed reaction is adenosine + phosphate = alpha-D-ribose 1-phosphate + adenine. It carries out the reaction cytidine + phosphate = cytosine + alpha-D-ribose 1-phosphate. It catalyses the reaction guanosine + phosphate = alpha-D-ribose 1-phosphate + guanine. The enzyme catalyses inosine + phosphate = alpha-D-ribose 1-phosphate + hypoxanthine. The catalysed reaction is thymidine + phosphate = 2-deoxy-alpha-D-ribose 1-phosphate + thymine. It carries out the reaction uridine + phosphate = alpha-D-ribose 1-phosphate + uracil. It catalyses the reaction xanthosine + phosphate = alpha-D-ribose 1-phosphate + xanthine. Its function is as follows. Catalyzes the phosphorolysis of diverse nucleosides, yielding D-ribose 1-phosphate and the respective free bases. Can use uridine, adenosine, guanosine, cytidine, thymidine, inosine and xanthosine as substrates. Also catalyzes the reverse reactions. This chain is Pyrimidine/purine nucleoside phosphorylase, found in Shewanella sp. (strain MR-4).